Consider the following 603-residue polypeptide: HAUS augmin-like complex subunit 3 (603 aa).

Serine 2 carries the post-translational modification N-acetylserine. Coiled coils occupy residues 93-177 (RLDD…TQLM), 305-336 (VDKE…DRSL), 389-426 (LSYE…LEML), and 458-495 (ENKK…SAQE).

It belongs to the HAUS3 family. Component of the HAUS augmin-like complex. The complex interacts with the gamma-tubulin ring complex and this interaction is required for spindle assembly. Interacts with EML3 (phosphorylated at 'Thr-881').

It localises to the cytoplasm. The protein localises to the cytoskeleton. The protein resides in the microtubule organizing center. It is found in the centrosome. Its subcellular location is the spindle. Functionally, contributes to mitotic spindle assembly, maintenance of centrosome integrity and completion of cytokinesis as part of the HAUS augmin-like complex. The protein is HAUS augmin-like complex subunit 3 (HAUS3) of Homo sapiens (Human).